A 137-amino-acid chain; its full sequence is Large ribosomal subunit protein uL16 (137 aa).

Belongs to the universal ribosomal protein uL16 family. As to quaternary structure, part of the 50S ribosomal subunit.

In terms of biological role, binds 23S rRNA and is also seen to make contacts with the A and possibly P site tRNAs. The sequence is that of Large ribosomal subunit protein uL16 from Acinetobacter baylyi (strain ATCC 33305 / BD413 / ADP1).